We begin with the raw amino-acid sequence, 1771 residues long: Kinase D-interacting substrate of 220 kDa (1771 aa).

At 1 to 499 (MSVLISQSVI…QIEPLFQFSW (499 aa)) the chain is on the cytoplasmic side. ANK repeat units lie at residues 4-33 (LISQ…DVDE), 37-66 (CGQT…NCNL), 70-99 (DNWT…NLEH), 103-132 (GGWT…NPSV), 136-165 (YSVY…KVNC), 169-198 (YGTT…DVDQ), 202-231 (NSMT…NVNL), 235-264 (DGNT…YVNI), 268-297 (SGDT…DIDI), 301-330 (DNKT…DTEI), 334-363 (DGET…KVSA), and 367-396 (KGDT…DGRL). A KAP NTPase domain is found at 440–953 (YDLYSSALAD…NIVSVTGRLL (514 aa)). The chain crosses the membrane as a helical span at residues 500 to 520 (LIVFLTLLLCGGLGLLFAFTV). Over 521–524 (HPNL) the chain is Extracellular. Residues 525-545 (GIAVSLSFLALLYIFFIVIYF) form a helical membrane-spanning segment. Over 546–659 (GGRREGESWN…KWKKTCCLPS (114 aa)) the chain is Cytoplasmic. The chain crosses the membrane as a helical span at residues 660–680 (FVIFLFIIGCIISGITLLAIF). Residues 681 to 685 (RVDPK) lie on the Extracellular side of the membrane. A helical membrane pass occupies residues 686–706 (HLTVNAVLISIASVVGLAFVL). Residues 707-1771 (NCRTWWQVLD…GFGEERESIL (1065 aa)) are Cytoplasmic-facing. Phosphoserine occurs at positions 882 and 885. Residue Thr914 is modified to Phosphothreonine. A Phosphoserine modification is found at Ser918. The mediates interaction with CRKL stretch occupies residues 1089 to 1092 (PRAP). The residue at position 1163 (Ser1163) is a Phosphoserine. 4 disordered regions span residues 1182-1202 (DAAE…PAPG), 1285-1310 (PEDP…RASH), 1344-1368 (RHSN…SQDS), and 1397-1564 (LEGG…EPIR). Phosphoserine occurs at positions 1296, 1352, 1359, 1361, 1362, and 1365. The segment covering 1346-1358 (SNLSWQSQTRRTP) has biased composition (polar residues). Over residues 1359–1368 (SLSSLNSQDS) the composition is skewed to low complexity. Residues 1403-1430 (STTISGRSSPHSTYYMGQSSSGGSIHSN) are compositionally biased toward polar residues. Residues 1431–1457 (LEQEKGKDSEPKPDDGRKSFLMKRGDV) are compositionally biased toward basic and acidic residues. Positions 1460–1470 (YSSSGVSTNDA) are enriched in polar residues. Phosphoserine occurs at positions 1521, 1526, 1555, and 1574. The span at 1522 to 1532 (DEDESGTEESD) shows a compositional bias: acidic residues. Residues 1537 to 1561 (LKDDKDRKAEGKVERVPKSPEHSAE) are compositionally biased toward basic and acidic residues. Residues 1578 to 1633 (LDKKDSSDSGVRSSESSPNHSLHNEVADDSQLEKANLIELEDDSHSGKRGIPHSLS) are disordered. The span at 1585–1594 (DSGVRSSESS) shows a compositional bias: low complexity. A phosphoserine mark is found at Ser1623 and Ser1633. Thr1679 carries the phosphothreonine modification. Position 1681 is a phosphoserine (Ser1681). Thr1684 is modified (phosphothreonine). Over residues 1713–1731 (LRPSSSPNPTTIQNENLKS) the composition is skewed to polar residues. The tract at residues 1713–1771 (LRPSSSPNPTTIQNENLKSMTHKRSQRSSYTRLSKDPPELHAAASSESTGFGEERESIL) is disordered. Residues 1766-1771 (ERESIL) carry the PDZ-binding motif.

As to quaternary structure, found in a complex, at least composed of KIDINS220, MAGI2, NTRK1 and RAPGEF2; the complex is mainly formed at late endosomes in a nerve growth factor (NGF)-dependent manner. Interacts with RAPGEF2; the interaction is strengthened after NGF stimulation. Isoform 2 interacts (via C-terminal domain) with MAGI2 isoform 1 (via PDZ domain). Interacts with NTRK1, NTRK2, NTRK3, ERKL and NGFR. Can form a ternary complex with NGFR and NTRK1 and this complex is affected by the expression levels of KIDINS220/ARMS. An increase in KIDINS220/ARMS expression leads to a decreased association of NGFR and NTRK1. Interacts (via PDZ-binding motif) with SNTA1 and SNTB2 (via PDZ domains). Interacts with EPHA4 and PRKD1. Tyrosine phosphorylated by NTRK1, NTRK2, EPHB2 and EPHA4. Phosphorylation at Ser-918 is induced by phorbol ester treatment. Phosphorylation by NTRK2 is induced by brain-derived neurotrophic factor (BDNF) and neurotrophin-4/5. Phosphorylation by NTRK1 is induced by nerve growth factor (NGF). In terms of tissue distribution, abundant in developing and adult neural tissues as well as neuroendocrine cells and dendritic cells. Overexpressed in melanoma and melanoma cell lines.

It is found in the membrane. The protein resides in the late endosome. In terms of biological role, promotes a prolonged MAP-kinase signaling by neurotrophins through activation of a Rap1-dependent mechanism. Provides a docking site for the CRKL-C3G complex, resulting in Rap1-dependent sustained ERK activation. May play an important role in regulating postsynaptic signal transduction through the syntrophin-mediated localization of receptor tyrosine kinases such as EPHA4. In cooperation with SNTA1 can enhance EPHA4-induced JAK/STAT activation. Plays a role in nerve growth factor (NGF)-induced recruitment of RAPGEF2 to late endosomes and neurite outgrowth. May play a role in neurotrophin- and ephrin-mediated neuronal outgrowth and in axon guidance during neural development and in neuronal regeneration. Modulates stress-induced apoptosis of melanoma cells via regulation of the MEK/ERK signaling pathway. In Homo sapiens (Human), this protein is Kinase D-interacting substrate of 220 kDa (KIDINS220).